We begin with the raw amino-acid sequence, 338 residues long: Secretory carrier-associated membrane protein 1 (338 aa).

The disordered stretch occupies residues 1–64 (MSDFDSNPFA…NVPNTQPAIM (64 aa)). Ser-2 is modified (N-acetylserine). The residue at position 2 (Ser-2) is a Phosphoserine. The Cytoplasmic portion of the chain corresponds to 2–155 (SDFDSNPFAD…QKTVKLMYYL (154 aa)). Thr-45 is subject to Phosphothreonine. The helical transmembrane segment at 156–176 (WMFHAVTLFLNIFGCLAWFCV) threads the bilayer. Topologically, residues 177–181 (DSSRA) are lumenal. Residues 182-202 (VDFGLSILWFLLFTPCSFVCW) form a helical membrane-spanning segment. Over 203–218 (YRPLYGAFRSDSSFRF) the chain is Cytoplasmic. Residues 219–239 (FVFFFVYICQFAVHVLQAAGF) traverse the membrane as a helical segment. Residues 240-261 (HNWGNCGWISSLTGLNKNIPVG) lie on the Lumenal side of the membrane. A helical membrane pass occupies residues 262 to 282 (IMMIIIAALFTASAVISLVMF). Topologically, residues 283 to 338 (KKVHGLYRTTGASFEKAQQEFATGVMSNKTVQTAAANAASTAATSAAQNAFKGNQM) are cytoplasmic.

It belongs to the SCAMP family. In terms of assembly, interacts with SYNRG, ITSN1 and SLC9A7.

Its subcellular location is the golgi apparatus. It is found in the trans-Golgi network membrane. It localises to the recycling endosome membrane. In terms of biological role, functions in post-Golgi recycling pathways. Acts as a recycling carrier to the cell surface. This chain is Secretory carrier-associated membrane protein 1 (Scamp1), found in Mus musculus (Mouse).